We begin with the raw amino-acid sequence, 417 residues long: Bifunctional thiamine biosynthesis protein ThiDN (417 aa).

Residues 1-235 (MVILAIGGYD…KSKFGYNSNP (235 aa)) form a hydroxymethylpyrimidine/phosphomethylpyrimidine kinase region. Q41 contacts 4-amino-5-hydroxymethyl-2-methylpyrimidine. The segment at 236–417 (TYINKEKVIK…VIQKIYNTLM (182 aa)) is thiamine-phosphate synthase.

It in the N-terminal section; belongs to the ThiD family. This sequence in the C-terminal section; belongs to the ThiN family.

It carries out the reaction 4-amino-5-hydroxymethyl-2-methylpyrimidine + ATP = 4-amino-2-methyl-5-(phosphooxymethyl)pyrimidine + ADP + H(+). It catalyses the reaction 4-amino-2-methyl-5-(phosphooxymethyl)pyrimidine + ATP = 4-amino-2-methyl-5-(diphosphooxymethyl)pyrimidine + ADP. The catalysed reaction is 2-[(2R,5Z)-2-carboxy-4-methylthiazol-5(2H)-ylidene]ethyl phosphate + 4-amino-2-methyl-5-(diphosphooxymethyl)pyrimidine + 2 H(+) = thiamine phosphate + CO2 + diphosphate. The enzyme catalyses 2-(2-carboxy-4-methylthiazol-5-yl)ethyl phosphate + 4-amino-2-methyl-5-(diphosphooxymethyl)pyrimidine + 2 H(+) = thiamine phosphate + CO2 + diphosphate. It carries out the reaction 4-methyl-5-(2-phosphooxyethyl)-thiazole + 4-amino-2-methyl-5-(diphosphooxymethyl)pyrimidine + H(+) = thiamine phosphate + diphosphate. It functions in the pathway cofactor biosynthesis; thiamine diphosphate biosynthesis; 4-amino-2-methyl-5-diphosphomethylpyrimidine from 5-amino-1-(5-phospho-D-ribosyl)imidazole. The protein operates within cofactor biosynthesis; thiamine diphosphate biosynthesis; thiamine phosphate from 4-amino-2-methyl-5-diphosphomethylpyrimidine and 4-methyl-5-(2-phosphoethyl)-thiazole: step 1/1. Functionally, catalyzes the phosphorylation of hydroxymethylpyrimidine phosphate (HMP-P) to HMP-PP, and of HMP to HMP-P. In terms of biological role, condenses 4-methyl-5-(beta-hydroxyethyl)thiazole monophosphate (THZ-P) and 4-amino-5-hydroxymethyl pyrimidine pyrophosphate (HMP-PP) to form thiamine monophosphate (TMP). This chain is Bifunctional thiamine biosynthesis protein ThiDN (thiDN), found in Methanocaldococcus jannaschii (strain ATCC 43067 / DSM 2661 / JAL-1 / JCM 10045 / NBRC 100440) (Methanococcus jannaschii).